The following is a 69-amino-acid chain: Putative membrane protein insertion efficiency factor (69 aa).

The protein belongs to the UPF0161 family.

It is found in the cell inner membrane. Its function is as follows. Could be involved in insertion of integral membrane proteins into the membrane. The chain is Putative membrane protein insertion efficiency factor from Syntrophotalea carbinolica (strain DSM 2380 / NBRC 103641 / GraBd1) (Pelobacter carbinolicus).